We begin with the raw amino-acid sequence, 20 residues long: Cytochrome P450-RR1 (20 aa).

It belongs to the cytochrome P450 family. The cofactor is heme.

In terms of biological role, P450-RRI catalyzes the O-dealkylation of 2-ethoxyphenol and 2-methoxyphenol to produce catechol. The cytochrome binds other ortho-substituted phenols, including 2-ethoxyphenol, 2-methylphenol and 2-chlorophenol. The protein is Cytochrome P450-RR1 of Rhodococcus rhodochrous.